Reading from the N-terminus, the 232-residue chain is Flagellar L-ring protein (232 aa).

The first 21 residues, 1-21 (MQKNAAHTYAISSLLVLSLTG), serve as a signal peptide directing secretion. The N-palmitoyl cysteine moiety is linked to residue Cys22. Cys22 is lipidated: S-diacylglycerol cysteine.

This sequence belongs to the FlgH family. The basal body constitutes a major portion of the flagellar organelle and consists of four rings (L,P,S, and M) mounted on a central rod.

The protein resides in the cell outer membrane. It is found in the bacterial flagellum basal body. Its function is as follows. Assembles around the rod to form the L-ring and probably protects the motor/basal body from shearing forces during rotation. This is Flagellar L-ring protein from Escherichia coli O6:H1 (strain CFT073 / ATCC 700928 / UPEC).